Reading from the N-terminus, the 213-residue chain is ATP phosphoribosyltransferase (213 aa).

This sequence belongs to the ATP phosphoribosyltransferase family. Short subfamily. In terms of assembly, heteromultimer composed of HisG and HisZ subunits.

The protein resides in the cytoplasm. The enzyme catalyses 1-(5-phospho-beta-D-ribosyl)-ATP + diphosphate = 5-phospho-alpha-D-ribose 1-diphosphate + ATP. It participates in amino-acid biosynthesis; L-histidine biosynthesis; L-histidine from 5-phospho-alpha-D-ribose 1-diphosphate: step 1/9. Functionally, catalyzes the condensation of ATP and 5-phosphoribose 1-diphosphate to form N'-(5'-phosphoribosyl)-ATP (PR-ATP). Has a crucial role in the pathway because the rate of histidine biosynthesis seems to be controlled primarily by regulation of HisG enzymatic activity. In Bacillus licheniformis (strain ATCC 14580 / DSM 13 / JCM 2505 / CCUG 7422 / NBRC 12200 / NCIMB 9375 / NCTC 10341 / NRRL NRS-1264 / Gibson 46), this protein is ATP phosphoribosyltransferase.